The chain runs to 368 residues: Homoserine O-acetyltransferase (368 aa).

One can recognise an AB hydrolase-1 domain in the interval 43 to 346 (ILLEHALTGT…EYGHDAFLVE (304 aa)). Ser145 functions as the Nucleophile in the catalytic mechanism. Substrate is bound at residue Arg212. Residues Asp307 and His340 contribute to the active site. Residue Asp341 participates in substrate binding.

The protein belongs to the AB hydrolase superfamily. MetX family. As to quaternary structure, homodimer.

It is found in the cytoplasm. It carries out the reaction L-homoserine + acetyl-CoA = O-acetyl-L-homoserine + CoA. It participates in amino-acid biosynthesis; L-methionine biosynthesis via de novo pathway; O-acetyl-L-homoserine from L-homoserine: step 1/1. Its function is as follows. Transfers an acetyl group from acetyl-CoA to L-homoserine, forming acetyl-L-homoserine. The sequence is that of Homoserine O-acetyltransferase from Listeria innocua serovar 6a (strain ATCC BAA-680 / CLIP 11262).